The chain runs to 465 residues: Uronate isomerase (465 aa).

The protein belongs to the metallo-dependent hydrolases superfamily. Uronate isomerase family.

The enzyme catalyses D-glucuronate = D-fructuronate. It carries out the reaction aldehydo-D-galacturonate = keto-D-tagaturonate. Its pathway is carbohydrate metabolism; pentose and glucuronate interconversion. This chain is Uronate isomerase, found in Streptococcus equi subsp. zooepidemicus (strain MGCS10565).